The primary structure comprises 169 residues: Ureidoglycolate lyase (169 aa).

Belongs to the ureidoglycolate lyase family. Homodimer. Ni(2+) serves as cofactor.

It carries out the reaction (S)-ureidoglycolate = urea + glyoxylate. It participates in nitrogen metabolism; (S)-allantoin degradation. Its function is as follows. Catalyzes the catabolism of the allantoin degradation intermediate (S)-ureidoglycolate, generating urea and glyoxylate. Involved in the utilization of allantoin as nitrogen source. The polypeptide is Ureidoglycolate lyase (Pseudomonas aeruginosa (strain LESB58)).